A 488-amino-acid chain; its full sequence is Glutamyl-tRNA(Gln) amidotransferase subunit A (488 aa).

Catalysis depends on charge relay system residues Lys-77 and Ser-152. The active-site Acyl-ester intermediate is Ser-176.

The protein belongs to the amidase family. GatA subfamily. Heterotrimer of A, B and C subunits.

The catalysed reaction is L-glutamyl-tRNA(Gln) + L-glutamine + ATP + H2O = L-glutaminyl-tRNA(Gln) + L-glutamate + ADP + phosphate + H(+). Its function is as follows. Allows the formation of correctly charged Gln-tRNA(Gln) through the transamidation of misacylated Glu-tRNA(Gln) in organisms which lack glutaminyl-tRNA synthetase. The reaction takes place in the presence of glutamine and ATP through an activated gamma-phospho-Glu-tRNA(Gln). This chain is Glutamyl-tRNA(Gln) amidotransferase subunit A, found in Streptococcus equi subsp. zooepidemicus (strain H70).